The primary structure comprises 261 residues: Cytochrome c oxidase subunit 3 (261 aa).

Over 1–15 the chain is Mitochondrial matrix; that stretch reads MAHQAHAYHMVDPSP. Residues 16–34 form a helical membrane-spanning segment; it reads WPLTGAIAALLMTSGLAIW. Topologically, residues 35–40 are mitochondrial intermembrane; the sequence is FHFHST. A helical membrane pass occupies residues 41–66; that stretch reads TLMTLGLILLLLTMYQWWRDIIREGT. Residues 67–72 lie on the Mitochondrial matrix side of the membrane; sequence FQGHHT. The chain crosses the membrane as a helical span at residues 73-105; the sequence is PPVQKGLRYGMILFITSEVFFFLGFFWAFYHSS. Over 106-128 the chain is Mitochondrial intermembrane; that stretch reads LAPTPELGGCWPPTGITPLDPFE. The helical transmembrane segment at 129–152 threads the bilayer; it reads VPLLNTAVLLASGVTVTWAHHSIM. The Mitochondrial matrix portion of the chain corresponds to 153-155; that stretch reads EGE. The helical transmembrane segment at 156 to 183 threads the bilayer; it reads RKQAIQSLALTILLGLYFTALQAMEYYE. At 184–190 the chain is on the mitochondrial intermembrane side; sequence APFTIAD. Residues 191–223 traverse the membrane as a helical segment; the sequence is GVYGSTFFVATGFHGLHVIIGSTFLAVCLLRQI. Topologically, residues 224-232 are mitochondrial matrix; that stretch reads QYHFTSEHH. The helical transmembrane segment at 233-256 threads the bilayer; sequence FGFEAAAWYWHFVDVVWLFLYVSI. The Mitochondrial intermembrane segment spans residues 257-261; the sequence is YWWGS.

This sequence belongs to the cytochrome c oxidase subunit 3 family. As to quaternary structure, component of the cytochrome c oxidase (complex IV, CIV), a multisubunit enzyme composed of 14 subunits. The complex is composed of a catalytic core of 3 subunits MT-CO1, MT-CO2 and MT-CO3, encoded in the mitochondrial DNA, and 11 supernumerary subunits COX4I, COX5A, COX5B, COX6A, COX6B, COX6C, COX7A, COX7B, COX7C, COX8 and NDUFA4, which are encoded in the nuclear genome. The complex exists as a monomer or a dimer and forms supercomplexes (SCs) in the inner mitochondrial membrane with NADH-ubiquinone oxidoreductase (complex I, CI) and ubiquinol-cytochrome c oxidoreductase (cytochrome b-c1 complex, complex III, CIII), resulting in different assemblies (supercomplex SCI(1)III(2)IV(1) and megacomplex MCI(2)III(2)IV(2)).

It is found in the mitochondrion inner membrane. It carries out the reaction 4 Fe(II)-[cytochrome c] + O2 + 8 H(+)(in) = 4 Fe(III)-[cytochrome c] + 2 H2O + 4 H(+)(out). In terms of biological role, component of the cytochrome c oxidase, the last enzyme in the mitochondrial electron transport chain which drives oxidative phosphorylation. The respiratory chain contains 3 multisubunit complexes succinate dehydrogenase (complex II, CII), ubiquinol-cytochrome c oxidoreductase (cytochrome b-c1 complex, complex III, CIII) and cytochrome c oxidase (complex IV, CIV), that cooperate to transfer electrons derived from NADH and succinate to molecular oxygen, creating an electrochemical gradient over the inner membrane that drives transmembrane transport and the ATP synthase. Cytochrome c oxidase is the component of the respiratory chain that catalyzes the reduction of oxygen to water. Electrons originating from reduced cytochrome c in the intermembrane space (IMS) are transferred via the dinuclear copper A center (CU(A)) of subunit 2 and heme A of subunit 1 to the active site in subunit 1, a binuclear center (BNC) formed by heme A3 and copper B (CU(B)). The BNC reduces molecular oxygen to 2 water molecules using 4 electrons from cytochrome c in the IMS and 4 protons from the mitochondrial matrix. This is Cytochrome c oxidase subunit 3 (mt-co3) from Cyprinus carpio (Common carp).